Consider the following 246-residue polypeptide: Probable 2-phosphosulfolactate phosphatase (246 aa).

The protein belongs to the ComB family. Requires Mg(2+) as cofactor.

The enzyme catalyses (2R)-O-phospho-3-sulfolactate + H2O = (2R)-3-sulfolactate + phosphate. The protein is Probable 2-phosphosulfolactate phosphatase of Synechococcus sp. (strain WH7803).